The sequence spans 282 residues: Acetyl-coenzyme A carboxylase carboxyl transferase subunit beta (282 aa).

The region spanning 26 to 282 is the CoA carboxyltransferase N-terminal domain; that stretch reads GLWHQTPTGK…VSKTVKLLVH (257 aa).

This sequence belongs to the AccD/PCCB family. Acetyl-CoA carboxylase is a heterohexamer composed of biotin carboxyl carrier protein (AccB), biotin carboxylase (AccC) and two subunits each of ACCase subunit alpha (AccA) and ACCase subunit beta (AccD).

It localises to the cytoplasm. The enzyme catalyses N(6)-carboxybiotinyl-L-lysyl-[protein] + acetyl-CoA = N(6)-biotinyl-L-lysyl-[protein] + malonyl-CoA. Its pathway is lipid metabolism; malonyl-CoA biosynthesis; malonyl-CoA from acetyl-CoA: step 1/1. Functionally, component of the acetyl coenzyme A carboxylase (ACC) complex. Biotin carboxylase (BC) catalyzes the carboxylation of biotin on its carrier protein (BCCP) and then the CO(2) group is transferred by the transcarboxylase to acetyl-CoA to form malonyl-CoA. The sequence is that of Acetyl-coenzyme A carboxylase carboxyl transferase subunit beta from Flavobacteriaceae bacterium (strain 3519-10).